Here is a 186-residue protein sequence, read N- to C-terminus: Peptidyl-tRNA hydrolase (186 aa).

Tyr-14 provides a ligand contact to tRNA. Catalysis depends on His-19, which acts as the Proton acceptor. TRNA is bound by residues Tyr-64, Asn-66, and Asn-112.

The protein belongs to the PTH family. As to quaternary structure, monomer.

It localises to the cytoplasm. The catalysed reaction is an N-acyl-L-alpha-aminoacyl-tRNA + H2O = an N-acyl-L-amino acid + a tRNA + H(+). Its function is as follows. Hydrolyzes ribosome-free peptidyl-tRNAs (with 1 or more amino acids incorporated), which drop off the ribosome during protein synthesis, or as a result of ribosome stalling. In terms of biological role, catalyzes the release of premature peptidyl moieties from peptidyl-tRNA molecules trapped in stalled 50S ribosomal subunits, and thus maintains levels of free tRNAs and 50S ribosomes. In Mesoplasma florum (strain ATCC 33453 / NBRC 100688 / NCTC 11704 / L1) (Acholeplasma florum), this protein is Peptidyl-tRNA hydrolase.